We begin with the raw amino-acid sequence, 215 residues long: ATP phosphoribosyltransferase (215 aa).

Belongs to the ATP phosphoribosyltransferase family. Short subfamily. As to quaternary structure, heteromultimer composed of HisG and HisZ subunits.

The protein resides in the cytoplasm. The catalysed reaction is 1-(5-phospho-beta-D-ribosyl)-ATP + diphosphate = 5-phospho-alpha-D-ribose 1-diphosphate + ATP. It functions in the pathway amino-acid biosynthesis; L-histidine biosynthesis; L-histidine from 5-phospho-alpha-D-ribose 1-diphosphate: step 1/9. Its function is as follows. Catalyzes the condensation of ATP and 5-phosphoribose 1-diphosphate to form N'-(5'-phosphoribosyl)-ATP (PR-ATP). Has a crucial role in the pathway because the rate of histidine biosynthesis seems to be controlled primarily by regulation of HisG enzymatic activity. This is ATP phosphoribosyltransferase from Prochlorococcus marinus (strain MIT 9215).